We begin with the raw amino-acid sequence, 59 residues long: Large ribosomal subunit protein uL30 (59 aa).

This sequence belongs to the universal ribosomal protein uL30 family. Part of the 50S ribosomal subunit.

The polypeptide is Large ribosomal subunit protein uL30 (Staphylococcus haemolyticus (strain JCSC1435)).